Reading from the N-terminus, the 594-residue chain is Probable translation initiation factor IF-2 (594 aa).

The tr-type G domain maps to 11 to 226; that stretch reads LRTPIVCVMG…LIGLAQRFLE (216 aa). Residues 20–27 form a G1 region; it reads GHVDHGKT. Residue 20-27 participates in GTP binding; it reads GHVDHGKT. Residues 45 to 49 are G2; the sequence is AITQH. The segment at 81–84 is G3; that stretch reads DTPG. GTP is bound by residues 81–85 and 135–138; these read DTPGH and NKID. The segment at 135 to 138 is G4; sequence NKID. The tract at residues 203–205 is G5; sequence SAR.

The protein belongs to the TRAFAC class translation factor GTPase superfamily. Classic translation factor GTPase family. IF-2 subfamily.

Functionally, function in general translation initiation by promoting the binding of the formylmethionine-tRNA to ribosomes. Seems to function along with eIF-2. This is Probable translation initiation factor IF-2 from Methanocella arvoryzae (strain DSM 22066 / NBRC 105507 / MRE50).